The following is a 483-amino-acid chain: Argininosuccinate lyase (483 aa).

It belongs to the lyase 1 family. Argininosuccinate lyase subfamily.

Its subcellular location is the cytoplasm. The catalysed reaction is 2-(N(omega)-L-arginino)succinate = fumarate + L-arginine. It participates in amino-acid biosynthesis; L-arginine biosynthesis; L-arginine from L-ornithine and carbamoyl phosphate: step 3/3. This chain is Argininosuccinate lyase, found in Albidiferax ferrireducens (strain ATCC BAA-621 / DSM 15236 / T118) (Rhodoferax ferrireducens).